The chain runs to 232 residues: Ribosomal RNA large subunit methyltransferase E (232 aa).

Positions 64, 66, 97, 113, and 138 each coordinate S-adenosyl-L-methionine. The Proton acceptor role is filled by K178.

The protein belongs to the class I-like SAM-binding methyltransferase superfamily. RNA methyltransferase RlmE family.

It localises to the cytoplasm. The enzyme catalyses uridine(2552) in 23S rRNA + S-adenosyl-L-methionine = 2'-O-methyluridine(2552) in 23S rRNA + S-adenosyl-L-homocysteine + H(+). Specifically methylates the uridine in position 2552 of 23S rRNA at the 2'-O position of the ribose in the fully assembled 50S ribosomal subunit. This Leptothrix cholodnii (strain ATCC 51168 / LMG 8142 / SP-6) (Leptothrix discophora (strain SP-6)) protein is Ribosomal RNA large subunit methyltransferase E.